A 444-amino-acid chain; its full sequence is N-succinylarginine dihydrolase (444 aa).

Residues 19–28 (SGLSVGNIAS), Asn-110, and 137–138 (HR) contribute to the substrate site. Glu-174 is an active-site residue. Position 214 (Arg-214) interacts with substrate. His-250 is an active-site residue. Residues Asp-252 and Asn-362 each coordinate substrate. The Nucleophile role is filled by Cys-368.

This sequence belongs to the succinylarginine dihydrolase family. As to quaternary structure, homodimer.

It carries out the reaction N(2)-succinyl-L-arginine + 2 H2O + 2 H(+) = N(2)-succinyl-L-ornithine + 2 NH4(+) + CO2. Its pathway is amino-acid degradation; L-arginine degradation via AST pathway; L-glutamate and succinate from L-arginine: step 2/5. Its function is as follows. Catalyzes the hydrolysis of N(2)-succinylarginine into N(2)-succinylornithine, ammonia and CO(2). This Aliivibrio fischeri (strain MJ11) (Vibrio fischeri) protein is N-succinylarginine dihydrolase.